The following is a 340-amino-acid chain: tRNA N6-adenosine threonylcarbamoyltransferase (340 aa).

Residues histidine 111 and histidine 115 each contribute to the Fe cation site. Substrate contacts are provided by residues 134-138 (LVSGG), aspartate 167, glycine 180, and asparagine 276. Residue aspartate 304 participates in Fe cation binding.

This sequence belongs to the KAE1 / TsaD family. Fe(2+) serves as cofactor.

Its subcellular location is the cytoplasm. It carries out the reaction L-threonylcarbamoyladenylate + adenosine(37) in tRNA = N(6)-L-threonylcarbamoyladenosine(37) in tRNA + AMP + H(+). Its function is as follows. Required for the formation of a threonylcarbamoyl group on adenosine at position 37 (t(6)A37) in tRNAs that read codons beginning with adenine. Is involved in the transfer of the threonylcarbamoyl moiety of threonylcarbamoyl-AMP (TC-AMP) to the N6 group of A37, together with TsaE and TsaB. TsaD likely plays a direct catalytic role in this reaction. This is tRNA N6-adenosine threonylcarbamoyltransferase from Helicobacter pylori (strain ATCC 700392 / 26695) (Campylobacter pylori).